A 187-amino-acid polypeptide reads, in one-letter code: Adenylate kinase (187 aa).

Position 10–15 (10–15 (GSGKGT)) interacts with ATP. Residues 30–59 (STGDLLRAEVAAGSPLGVKAKEVMARGDLV) are NMP. Residues threonine 31, arginine 36, 57-59 (DLV), 85-88 (GYPR), and glutamine 92 contribute to the AMP site. Residues 126–136 (GRAKAEGREDD) are LID. Arginine 127 lines the ATP pocket. AMP contacts are provided by arginine 133 and arginine 144. Glycine 172 contacts ATP.

The protein belongs to the adenylate kinase family. Monomer.

Its subcellular location is the cytoplasm. The catalysed reaction is AMP + ATP = 2 ADP. Its pathway is purine metabolism; AMP biosynthesis via salvage pathway; AMP from ADP: step 1/1. Its function is as follows. Catalyzes the reversible transfer of the terminal phosphate group between ATP and AMP. Plays an important role in cellular energy homeostasis and in adenine nucleotide metabolism. In Xanthomonas campestris pv. campestris (strain B100), this protein is Adenylate kinase.